We begin with the raw amino-acid sequence, 102 residues long: Large ribosomal subunit protein bL21 (102 aa).

It belongs to the bacterial ribosomal protein bL21 family. As to quaternary structure, part of the 50S ribosomal subunit. Contacts protein L20.

Its function is as follows. This protein binds to 23S rRNA in the presence of protein L20. This is Large ribosomal subunit protein bL21 from Clavibacter sepedonicus (Clavibacter michiganensis subsp. sepedonicus).